The chain runs to 421 residues: Gamma-glutamyl phosphate reductase (421 aa).

This sequence belongs to the gamma-glutamyl phosphate reductase family.

It localises to the cytoplasm. The catalysed reaction is L-glutamate 5-semialdehyde + phosphate + NADP(+) = L-glutamyl 5-phosphate + NADPH + H(+). The protein operates within amino-acid biosynthesis; L-proline biosynthesis; L-glutamate 5-semialdehyde from L-glutamate: step 2/2. Its function is as follows. Catalyzes the NADPH-dependent reduction of L-glutamate 5-phosphate into L-glutamate 5-semialdehyde and phosphate. The product spontaneously undergoes cyclization to form 1-pyrroline-5-carboxylate. The protein is Gamma-glutamyl phosphate reductase of Leptospira biflexa serovar Patoc (strain Patoc 1 / ATCC 23582 / Paris).